A 74-amino-acid polypeptide reads, in one-letter code: uncharacterized protein (74 aa).

Residues 1 to 25 (MMMTDLPENIRKTAVALLRLGEATA) form the signal peptide.

This is an uncharacterized protein from Archaeoglobus fulgidus (strain ATCC 49558 / DSM 4304 / JCM 9628 / NBRC 100126 / VC-16).